The primary structure comprises 242 residues: Ribosomal RNA small subunit methyltransferase G (242 aa).

Residues glycine 78, phenylalanine 83, 129-130 (AE), and arginine 148 contribute to the S-adenosyl-L-methionine site. Residues 221 to 242 (TKKRYPRKAGVPEKSPIGGKHD) are disordered.

This sequence belongs to the methyltransferase superfamily. RNA methyltransferase RsmG family.

The protein resides in the cytoplasm. Specifically methylates the N7 position of a guanine in 16S rRNA. The protein is Ribosomal RNA small subunit methyltransferase G of Oenococcus oeni (strain ATCC BAA-331 / PSU-1).